We begin with the raw amino-acid sequence, 987 residues long: MSDNEKSTQTEEPNFRYNAALAQDIENKWQKIWDEQGTFWAANVNGDLKDGKGRNAEGRTAYFAMDMFPYPSGKGLHVGHPLGYLASDVVSRYHRMKGENVLHAMGYDAFGLPAEQYAVQTGQHPRVTTEANIANMSRQLHRMGLSFDNRRTFATIDPGYVRWTQWIFSRIYDSWYDEDATNPSGSKGSARPIAELVAKFESGEKAIPGHESDGKQWSDLTDAEQQDILNDFRLAYISKSPVNWCPGLGTVLANEEVTAEGKSERGNFPVFQRELRQWSMRITKYGHRLIADLDGINWPEKVKLMQRNWIGESHGASVHFIVATADGDKDMEIYTTRPDTLFGTTFAVVSPEHHLLENVPAEWPADVPEDWKGGYANPVEAVKAYRLAAEAKTAKDRVNEAGEKTGLFTGLYATNPITGAKLPLFTADYVLMDYGTGAIMAVPGGDQRDYDFAVKFGLPVIYTVTPLPDSGDDLANYEGKAPFVSHDGIVINSSVEATEAKGDALSLNGLRVDDAIAKVNAWLESAGVGKGTVSYRLRDWLFSRQRYWGEPFPIVYGEDGTPHLLPDSALPINLPDVPDYEPRTFDPMDAESNPEAPLSRNEDWVKVELDLGDGKKTYYRDTNTMPNWAGSCWYYMRYIDPTDTKHMVEKDEFDYWMGPNHNKYSGDEGGVDLYIGGVEHAVLHLLYSRFWHKVLFDLGYVDSAEPFHKLFNQGMIQAYAYTDDRGQYVPADEVVEGPADASGEPTFTWNGEHANREFGKMGKSLKNIVTPDYMYENYGADTFRLYEMSMGPLDESRPWNTRNVVGGMRFLQRLWRNVVDETTGQAHVTEDTPDEKTLKLLNNTIAEVTAEMEGMRPNTAIAKLIVLNNHLTGLKAVPRAAVEPLILMLAPIAPHICEEMWSKLGHAESLSAEPWPVADERYVGHDTVTAVVQIKGKVRAKLEVPVDIDPADLEKQALAAVADRLGGKEPRKVIVKAPKIVSIVPAE.

The 'HIGH' region signature appears at 69–80 (PYPSGKGLHVGH). A 'KMSKS' region motif is present at residues 760-764 (KMGKS). An ATP-binding site is contributed by lysine 763.

Belongs to the class-I aminoacyl-tRNA synthetase family.

The protein resides in the cytoplasm. It carries out the reaction tRNA(Leu) + L-leucine + ATP = L-leucyl-tRNA(Leu) + AMP + diphosphate. This Bifidobacterium longum (strain NCC 2705) protein is Leucine--tRNA ligase.